The chain runs to 443 residues: Two-pore potassium channel 2 (443 aa).

The Cytoplasmic segment spans residues 1 to 144; the sequence is MANDGNGDNN…KTDQQSDSKT (144 aa). Residues 67-109 form a disordered region; the sequence is SLPIDALSQNPSTSSSATTSFSDSTDLLLPLTEPNKPVRKSKP. A compositionally biased stretch (low complexity) spans 72–98; that stretch reads ALSQNPSTSSSATTSFSDSTDLLLPLT. The helical transmembrane segment at 145 to 165 threads the bilayer; the sequence is IVNQAVALLVVYLSLGVLIYW. Positions 181 to 200 form an intramembrane region, pore-forming; that stretch reads DALYFCIVTMCTIGYGDITP. The helical transmembrane segment at 208 to 228 threads the bilayer; that stretch reads FSIFFVLVGFGFMDILLSGMV. Residues 229-274 lie on the Cytoplasmic side of the membrane; it reads TYVLDLQENYMLETARNESLNLNDRDKVRSYIIDVKKGRMRIRLKV. A helical transmembrane segment spans residues 275–295; the sequence is GLALGVVVLCLGFGVLIMHFV. Residues 302 to 321 constitute an intramembrane region (pore-forming); sequence DSFYFSVMSVTTVGYGDRAF. The chain crosses the membrane as a helical span at residues 328 to 348; the sequence is LLAAMWLLVSTLAVARAILFL. The Cytoplasmic portion of the chain corresponds to 349-443; the sequence is AESRVDKRNR…TKDLPTATSI (95 aa). EF-hand domains are found at residues 365–400 and 404–439; these read LGES…KMDK and KDIN…DLPT. Ca(2+)-binding residues include D378, D380, N382, C384, E389, D417, S421, R423, and D428.

The protein belongs to the two pore domain potassium channel (TC 1.A.1.7) family. As to quaternary structure, homodimer. In terms of tissue distribution, expressed in roots, stems, leaves and flowers.

The protein resides in the vacuole membrane. In terms of biological role, probable voltage-independent potassium-selective tonoplast ion channel. This is Two-pore potassium channel 2 (TPK2) from Arabidopsis thaliana (Mouse-ear cress).